We begin with the raw amino-acid sequence, 408 residues long: UDP-N-acetylglucosamine--dolichyl-phosphate N-acetylglucosaminephosphotransferase (408 aa).

At 1-10 (MWAFPELPMP) the chain is on the lumenal side. A helical membrane pass occupies residues 11-38 (LLVNLIGSLMGFVATVTLIPAFRGHFIA). The Cytoplasmic portion of the chain corresponds to 39–58 (ARLCGQDLNKSSREQIPESQ). UDP-N-acetyl-alpha-D-glucosamine is bound by residues 44-46 (QDL) and E56. Residues 59 to 78 (GVISGAVFLIILFCFIPFPF) traverse the membrane as a helical segment. Topologically, residues 79 to 91 (LNCFVEQQCKAFP) are lumenal. The helical transmembrane segment at 92–118 (HHEFVALIGALLAICCMIFLGFADDVL) threads the bilayer. Residues 119–121 (NLR) lie on the Cytoplasmic side of the membrane. Residues 122-143 (WRHKLLLPTAASLPLLMVYFTN) form a helical membrane-spanning segment. K125 contacts dolichyl phosphate. The Lumenal segment spans residues 144-166 (FGNTTIVVPKPLRPILGLHLDLG). The N-linked (GlcNAc...) asparagine glycan is linked to N146. The chain crosses the membrane as a helical span at residues 167-186 (ILYYVYMGLLAVFCTNAINI). 178-186 (VFCTNAINI) serves as a coordination point for dolichyl phosphate. N185 is a Mg(2+) binding site. At 187 to 192 (LAGING) the chain is on the cytoplasmic side. Residue N191 coordinates UDP-N-acetyl-alpha-D-glucosamine. The chain crosses the membrane as a helical span at residues 193 to 213 (LEAGQSLVISASIIVFNLVEL). Residues 214-218 (DGDYR) are Lumenal-facing. A helical membrane pass occupies residues 219–242 (DDHIFSLYFMIPFFFTTLGLLYHN). Residues 243 to 250 (WYPSRVFV) are Cytoplasmic-facing. Residues 251-269 (GDTFCYFAGMTFAVVGILG) traverse the membrane as a helical segment. Mg(2+) is bound at residue D252. Over 270–271 (HF) the chain is Lumenal. A helical transmembrane segment spans residues 272-293 (SKTMLLFFMPQVFNFLYSLPQL). The Cytoplasmic segment spans residues 294–375 (LHIIPCPRHR…LLLKVFGPMH (82 aa)). Residue 301 to 303 (RHR) participates in UDP-N-acetyl-alpha-D-glucosamine binding. A helical transmembrane segment spans residues 376 to 400 (ERNLTLLLLLLQVVGSAVTFSIRYQ). The Lumenal portion of the chain corresponds to 401-408 (LVRLFYDV).

The protein belongs to the glycosyltransferase 4 family. In terms of assembly, homodimer. Requires Mg(2+) as cofactor.

The protein localises to the endoplasmic reticulum membrane. It carries out the reaction a di-trans,poly-cis-dolichyl phosphate + UDP-N-acetyl-alpha-D-glucosamine = an N-acetyl-alpha-D-glucosaminyl-diphospho-di-trans,poly-cis-dolichol + UMP. It participates in protein modification; protein glycosylation. With respect to regulation, inhibited by natural nucleoside antibiotic tunicamycin, which acts as a structural analog and competitor of UDP-GlcNAc. Activated by Man-P-Dol. Activated by manganese. Inhibited by diumycin. Functionally, UDP-N-acetylglucosamine--dolichyl-phosphate N-acetylglucosaminephosphotransferase that operates in the biosynthetic pathway of dolichol-linked oligosaccharides, the glycan precursors employed in protein asparagine (N)-glycosylation. The assembly of dolichol-linked oligosaccharides begins on the cytosolic side of the endoplasmic reticulum membrane and finishes in its lumen. The sequential addition of sugars to dolichol pyrophosphate produces dolichol-linked oligosaccharides containing fourteen sugars, including two GlcNAcs, nine mannoses and three glucoses. Once assembled, the oligosaccharide is transferred from the lipid to nascent proteins by oligosaccharyltransferases. Catalyzes the initial step of dolichol-linked oligosaccharide biosynthesis, transfering GlcNAc-1-P from cytosolic UDP-GlcNAc onto the carrier lipid dolichyl phosphate (P-dolichol), yielding GlcNAc-P-P-dolichol embedded in the cytoplasmic leaflet of the endoplasmic reticulum membrane. The sequence is that of UDP-N-acetylglucosamine--dolichyl-phosphate N-acetylglucosaminephosphotransferase from Bos taurus (Bovine).